Here is a 475-residue protein sequence, read N- to C-terminus: Pup--protein ligase (475 aa).

Glutamate 19 is a Mg(2+) binding site. Arginine 64 lines the ATP pocket. Tyrosine 66 provides a ligand contact to Mg(2+). The Proton acceptor role is filled by aspartate 68. Residue glutamate 74 participates in Mg(2+) binding. ATP-binding residues include threonine 77 and tryptophan 436.

The protein belongs to the Pup ligase/Pup deamidase family. Pup-conjugating enzyme subfamily.

The enzyme catalyses ATP + [prokaryotic ubiquitin-like protein]-L-glutamate + [protein]-L-lysine = ADP + phosphate + N(6)-([prokaryotic ubiquitin-like protein]-gamma-L-glutamyl)-[protein]-L-lysine.. Its pathway is protein degradation; proteasomal Pup-dependent pathway. It functions in the pathway protein modification; protein pupylation. In terms of biological role, catalyzes the covalent attachment of the prokaryotic ubiquitin-like protein modifier Pup to the proteasomal substrate proteins, thereby targeting them for proteasomal degradation. This tagging system is termed pupylation. The ligation reaction involves the side-chain carboxylate of the C-terminal glutamate of Pup and the side-chain amino group of a substrate lysine. This Corynebacterium aurimucosum (strain ATCC 700975 / DSM 44827 / CIP 107346 / CN-1) (Corynebacterium nigricans) protein is Pup--protein ligase.